A 118-amino-acid polypeptide reads, in one-letter code: Protein BEX4 (118 aa).

Positions 14–50 (VEKDKKDKKGGKASKQSEEEPHHLEEVENKKPGGNVR) are disordered. Positions 28-44 (KQSEEEPHHLEEVENKK) are enriched in basic and acidic residues. Residues 30–88 (SEEEPHHLEEVENKKPGGNVRRKVRRLVPNFLWAIPNRHVDRNEGGEDVGRFVVQGTEV) are interaction with SIRT2. The interaction with alpha-tubulin stretch occupies residues 30–118 (SEEEPHHLEE…DNHYDFCLIP (89 aa)). C115 contributes to the Zn(2+) binding site.

It belongs to the BEX family. As to quaternary structure, interacts with alpha-tubulin. Interacts with SIRT2. Post-translationally, ubiquitinated and degraded by the proteasome. In terms of tissue distribution, expressed in both Sertoli and germ cells as well as interstitial area of the testis (at protein level).

It is found in the cytoplasm. Its subcellular location is the cytoskeleton. The protein localises to the spindle pole. The protein resides in the nucleus. Its function is as follows. May play a role in microtubule deacetylation by negatively regulating the SIRT2 deacetylase activity toward alpha-tubulin and thereby participate in the control of cell cycle progression and genomic stability. In absence of reductive stress, acts as a pseudosubstrate for the CRL2(FEM1B) complex: associates with FEM1B via zinc, thereby preventing association between FEM1B and its substrates. The sequence is that of Protein BEX4 from Mus musculus (Mouse).